A 403-amino-acid chain; its full sequence is Digeranylgeranylglycerophospholipid reductase 1 (403 aa).

Alanine 14, aspartate 33, cysteine 44, alanine 45, glycine 47, arginine 98, valine 122, aspartate 277, glycine 289, and isoleucine 290 together coordinate FAD.

This sequence belongs to the geranylgeranyl reductase family. DGGGPL reductase subfamily. FAD serves as cofactor.

It catalyses the reaction a 2,3-bis-O-phytanyl-sn-glycerol 1-phospholipid + 8 A = a 2,3-bis-O-(geranylgeranyl)-sn-glycerol 1-phospholipid + 8 AH2. The enzyme catalyses 2,3-bis-O-(phytanyl)-sn-glycerol 1-phosphate + 8 A = 2,3-bis-O-(geranylgeranyl)-sn-glycerol 1-phosphate + 8 AH2. The catalysed reaction is CDP-2,3-bis-O-(geranylgeranyl)-sn-glycerol + 8 AH2 = CDP-2,3-bis-O-(phytanyl)-sn-glycerol + 8 A. It carries out the reaction archaetidylserine + 8 AH2 = 2,3-bis-O-phytanyl-sn-glycero-3-phospho-L-serine + 8 A. The protein operates within membrane lipid metabolism; glycerophospholipid metabolism. Is involved in the reduction of 2,3-digeranylgeranylglycerophospholipids (unsaturated archaeols) into 2,3-diphytanylglycerophospholipids (saturated archaeols) in the biosynthesis of archaeal membrane lipids. Catalyzes the formation of archaetidic acid (2,3-di-O-phytanyl-sn-glyceryl phosphate) from 2,3-di-O-geranylgeranylglyceryl phosphate (DGGGP) via the hydrogenation of each double bond of the isoprenoid chains. Is also probably able to reduce double bonds of geranyl groups in CDP-2,3-bis-O-(geranylgeranyl)-sn-glycerol and archaetidylserine, thus acting at various stages in the biosynthesis of archaeal membrane lipids. The chain is Digeranylgeranylglycerophospholipid reductase 1 from Methanosphaera stadtmanae (strain ATCC 43021 / DSM 3091 / JCM 11832 / MCB-3).